A 240-amino-acid polypeptide reads, in one-letter code: Probable septum site-determining protein MinC (240 aa).

Belongs to the MinC family. In terms of assembly, interacts with MinD and FtsZ.

Its function is as follows. Cell division inhibitor that blocks the formation of polar Z ring septums. Rapidly oscillates between the poles of the cell to destabilize FtsZ filaments that have formed before they mature into polar Z rings. Prevents FtsZ polymerization. This chain is Probable septum site-determining protein MinC, found in Aeromonas hydrophila subsp. hydrophila (strain ATCC 7966 / DSM 30187 / BCRC 13018 / CCUG 14551 / JCM 1027 / KCTC 2358 / NCIMB 9240 / NCTC 8049).